Consider the following 509-residue polypeptide: Pituitary homeobox homolog Ptx1 (509 aa).

Positions 70–98 (NGAGSAGSAESATTTSTALSSGSTGSSTV) are enriched in low complexity. Disordered stretches follow at residues 70–125 (NGAG…SSVS), 148–171 (QDLV…PKHE), and 204–273 (LNNF…HFTS). The span at 227–242 (RSVNETTIKTENISSS) shows a compositional bias: polar residues. Residues 243–258 (GHDEPMTTSGEEPKND) are compositionally biased toward basic and acidic residues. A compositionally biased stretch (basic residues) spans 259–269 (KKNKRQRRQRT). Residues 262 to 322 (KRQRRQRTHF…KNRRAKWRKR (61 aa)) constitute a DNA-binding region (homeobox). Residues 460–473 (SSIATLRLKAKQHA) carry the OAR motif. The Nuclear localization signal motif lies at 464–470 (TLRLKAK).

It belongs to the paired homeobox family. Bicoid subfamily.

It localises to the nucleus. Appears to control physiological cell functions rather than pattern formation during embryogenesis. This chain is Pituitary homeobox homolog Ptx1 (Ptx1), found in Drosophila melanogaster (Fruit fly).